The following is a 336-amino-acid chain: Glycerol-3-phosphate dehydrogenase [NAD(P)+] (336 aa).

Positions 11, 12, 32, and 109 each coordinate NADPH. 3 residues coordinate sn-glycerol 3-phosphate: Lys109, Gly140, and Ser142. Ala144 is a binding site for NADPH. Residues Lys195, Asp248, Ser258, Arg259, and Asn260 each contribute to the sn-glycerol 3-phosphate site. Residue Lys195 is the Proton acceptor of the active site. Arg259 provides a ligand contact to NADPH. Positions 283 and 285 each coordinate NADPH.

The protein belongs to the NAD-dependent glycerol-3-phosphate dehydrogenase family.

The protein localises to the cytoplasm. The catalysed reaction is sn-glycerol 3-phosphate + NAD(+) = dihydroxyacetone phosphate + NADH + H(+). It carries out the reaction sn-glycerol 3-phosphate + NADP(+) = dihydroxyacetone phosphate + NADPH + H(+). Its pathway is membrane lipid metabolism; glycerophospholipid metabolism. Its function is as follows. Catalyzes the reduction of the glycolytic intermediate dihydroxyacetone phosphate (DHAP) to sn-glycerol 3-phosphate (G3P), the key precursor for phospholipid synthesis. In Leuconostoc mesenteroides subsp. mesenteroides (strain ATCC 8293 / DSM 20343 / BCRC 11652 / CCM 1803 / JCM 6124 / NCDO 523 / NBRC 100496 / NCIMB 8023 / NCTC 12954 / NRRL B-1118 / 37Y), this protein is Glycerol-3-phosphate dehydrogenase [NAD(P)+].